The sequence spans 344 residues: Geranylgeranyl transferase type-2 subunit alpha (344 aa).

PFTA repeat units follow at residues 44 to 78 (YSEG…NDVF), 89 to 123 (LLDN…NAPY), 125 to 159 (NWNY…QIER), 165 to 199 (LAKK…TILN), 214 to 248 (ILEQ…HCNP), and 266 to 293 (YLQK…SLVN).

The protein belongs to the protein prenyltransferase subunit alpha family. As to quaternary structure, heterodimer of an alpha and a beta subunit.

It catalyses the reaction geranylgeranyl diphosphate + L-cysteinyl-[protein] = S-geranylgeranyl-L-cysteinyl-[protein] + diphosphate. Its function is as follows. Catalyzes the transfer of a geranyl-geranyl moiety from geranyl-geranyl pyrophosphate to proteins having the C-terminal-XCC or -XCXC, where both cysteines may become modified. This is Geranylgeranyl transferase type-2 subunit alpha (bet4) from Schizosaccharomyces pombe (strain 972 / ATCC 24843) (Fission yeast).